A 156-amino-acid polypeptide reads, in one-letter code: SsrA-binding protein (156 aa).

It belongs to the SmpB family.

It is found in the cytoplasm. In terms of biological role, required for rescue of stalled ribosomes mediated by trans-translation. Binds to transfer-messenger RNA (tmRNA), required for stable association of tmRNA with ribosomes. tmRNA and SmpB together mimic tRNA shape, replacing the anticodon stem-loop with SmpB. tmRNA is encoded by the ssrA gene; the 2 termini fold to resemble tRNA(Ala) and it encodes a 'tag peptide', a short internal open reading frame. During trans-translation Ala-aminoacylated tmRNA acts like a tRNA, entering the A-site of stalled ribosomes, displacing the stalled mRNA. The ribosome then switches to translate the ORF on the tmRNA; the nascent peptide is terminated with the 'tag peptide' encoded by the tmRNA and targeted for degradation. The ribosome is freed to recommence translation, which seems to be the essential function of trans-translation. The protein is SsrA-binding protein of Staphylococcus epidermidis (strain ATCC 35984 / DSM 28319 / BCRC 17069 / CCUG 31568 / BM 3577 / RP62A).